A 363-amino-acid polypeptide reads, in one-letter code: GTPase Obg (363 aa).

One can recognise an Obg domain in the interval 1–159; sequence MKFLDEAKVY…KTIWLRLKLI (159 aa). The region spanning 160–327 is the OBG-type G domain; it reads ADAGLVGLPN…VLRALRDIIV (168 aa). GTP contacts are provided by residues 166-173, 191-195, 212-215, 279-282, and 308-310; these read GLPNAGKS, FTTLH, DIPG, SQID, and SAV. Residues Ser-173 and Thr-193 each contribute to the Mg(2+) site. The segment at 332-363 is disordered; that stretch reads EEKPAKAPKLRHRDMIVSEENNQGEDGADDQP. Residues 353–363 are compositionally biased toward acidic residues; sequence NQGEDGADDQP.

This sequence belongs to the TRAFAC class OBG-HflX-like GTPase superfamily. OBG GTPase family. In terms of assembly, monomer. It depends on Mg(2+) as a cofactor.

It localises to the cytoplasm. In terms of biological role, an essential GTPase which binds GTP, GDP and possibly (p)ppGpp with moderate affinity, with high nucleotide exchange rates and a fairly low GTP hydrolysis rate. Plays a role in control of the cell cycle, stress response, ribosome biogenesis and in those bacteria that undergo differentiation, in morphogenesis control. The polypeptide is GTPase Obg (Rhizobium etli (strain ATCC 51251 / DSM 11541 / JCM 21823 / NBRC 15573 / CFN 42)).